We begin with the raw amino-acid sequence, 382 residues long: Dual-specificity RNA methyltransferase RlmN (382 aa).

The active-site Proton acceptor is the glutamate 96. Positions glutamine 102–aspartate 340 constitute a Radical SAM core domain. Cysteine 109 and cysteine 345 form a disulfide bridge. [4Fe-4S] cluster is bound by residues cysteine 116, cysteine 120, and cysteine 123. S-adenosyl-L-methionine is bound by residues glycine 170–glutamate 171, serine 202, serine 224–histidine 226, and asparagine 302. Cysteine 345 serves as the catalytic S-methylcysteine intermediate.

It belongs to the radical SAM superfamily. RlmN family. Requires [4Fe-4S] cluster as cofactor.

The protein localises to the cytoplasm. The enzyme catalyses adenosine(2503) in 23S rRNA + 2 reduced [2Fe-2S]-[ferredoxin] + 2 S-adenosyl-L-methionine = 2-methyladenosine(2503) in 23S rRNA + 5'-deoxyadenosine + L-methionine + 2 oxidized [2Fe-2S]-[ferredoxin] + S-adenosyl-L-homocysteine. It catalyses the reaction adenosine(37) in tRNA + 2 reduced [2Fe-2S]-[ferredoxin] + 2 S-adenosyl-L-methionine = 2-methyladenosine(37) in tRNA + 5'-deoxyadenosine + L-methionine + 2 oxidized [2Fe-2S]-[ferredoxin] + S-adenosyl-L-homocysteine. In terms of biological role, specifically methylates position 2 of adenine 2503 in 23S rRNA and position 2 of adenine 37 in tRNAs. m2A2503 modification seems to play a crucial role in the proofreading step occurring at the peptidyl transferase center and thus would serve to optimize ribosomal fidelity. This Ectopseudomonas mendocina (strain ymp) (Pseudomonas mendocina) protein is Dual-specificity RNA methyltransferase RlmN.